Consider the following 137-residue polypeptide: Large ribosomal subunit protein uL16 (137 aa).

The protein belongs to the universal ribosomal protein uL16 family. Part of the 50S ribosomal subunit.

In terms of biological role, binds 23S rRNA and is also seen to make contacts with the A and possibly P site tRNAs. The chain is Large ribosomal subunit protein uL16 from Maricaulis maris (strain MCS10) (Caulobacter maris).